The following is a 326-amino-acid chain: Malate dehydrogenase (326 aa).

11–17 (GAAGQIG) lines the NAD(+) pocket. 2 residues coordinate substrate: R92 and R98. Residues N105, Q112, and 129–131 (VGN) each bind NAD(+). The substrate site is built by N131 and R162. H187 functions as the Proton acceptor in the catalytic mechanism.

The protein belongs to the LDH/MDH superfamily. MDH type 2 family.

It carries out the reaction (S)-malate + NAD(+) = oxaloacetate + NADH + H(+). In terms of biological role, catalyzes the reversible oxidation of malate to oxaloacetate. This chain is Malate dehydrogenase, found in Halorhodospira halophila (strain DSM 244 / SL1) (Ectothiorhodospira halophila (strain DSM 244 / SL1)).